The chain runs to 156 residues: Guanine deaminase (156 aa).

The region spanning 1–132 is the CMP/dCMP-type deaminase domain; the sequence is MNHETFLKRA…KPAEERTIPF (132 aa). His53 is a binding site for Zn(2+). The active-site Proton donor is Glu55. Residues Cys83 and Cys86 each contribute to the Zn(2+) site.

The protein belongs to the cytidine and deoxycytidylate deaminase family. Requires Zn(2+) as cofactor.

It catalyses the reaction guanine + H2O + H(+) = xanthine + NH4(+). It participates in purine metabolism; guanine degradation; xanthine from guanine: step 1/1. In terms of biological role, catalyzes the hydrolytic deamination of guanine, producing xanthine and ammonia. In Bacillus subtilis (strain 168), this protein is Guanine deaminase (guaD).